The sequence spans 394 residues: Phenylalanine 4-monooxygenase, chloroplastic (394 aa).

A chloroplast-targeting transit peptide spans 1 to 79; that stretch reads MAMEVGYLRH…LNQIQAVSTA (79 aa). The interval 75-97 is disordered; the sequence is AVSTAEKEREADKTSTPPIPSSI. H252, H257, and E297 together coordinate Fe cation.

This sequence belongs to the biopterin-dependent aromatic amino acid hydroxylase family. In terms of assembly, forms monomers. The cofactor is Fe(2+).

Its subcellular location is the plastid. It localises to the chloroplast. It carries out the reaction (6R)-L-erythro-5,6,7,8-tetrahydrobiopterin + L-phenylalanine + O2 = (4aS,6R)-4a-hydroxy-L-erythro-5,6,7,8-tetrahydrobiopterin + L-tyrosine. Functionally, catalyzes the hydroxylation of L-phenylalanine to L-tyrosine. Does not seem to be tetrahydropterin-dependent and shows preference for 10-formyltetrahydrofolate as cosubstrate and electron donor. The chain is Phenylalanine 4-monooxygenase, chloroplastic from Physcomitrium patens (Spreading-leaved earth moss).